The chain runs to 536 residues: Zinc finger CCCH domain-containing protein 18 (536 aa).

Residues E156–I183 form a C3H1-type zinc finger. Residues S211–E294 enclose the HTH OST-type domain. One can recognise an RRM domain in the interval R317–E392.

Its function is as follows. Possesses ribonuclease activity in vitro. The polypeptide is Zinc finger CCCH domain-containing protein 18 (Arabidopsis thaliana (Mouse-ear cress)).